The sequence spans 228 residues: Octanoyltransferase (228 aa).

Positions 31–212 constitute a BPL/LPL catalytic domain; it reads GETDGILILL…KFSEVFGIHF (182 aa). Residues 76–83, 143–145, and 156–158 contribute to the substrate site; these read RGGKITFH, AIG, and GIA. The active-site Acyl-thioester intermediate is C174.

It belongs to the LipB family.

It localises to the cytoplasm. The enzyme catalyses octanoyl-[ACP] + L-lysyl-[protein] = N(6)-octanoyl-L-lysyl-[protein] + holo-[ACP] + H(+). Its pathway is protein modification; protein lipoylation via endogenous pathway; protein N(6)-(lipoyl)lysine from octanoyl-[acyl-carrier-protein]: step 1/2. In terms of biological role, catalyzes the transfer of endogenously produced octanoic acid from octanoyl-acyl-carrier-protein onto the lipoyl domains of lipoate-dependent enzymes. Lipoyl-ACP can also act as a substrate although octanoyl-ACP is likely to be the physiological substrate. This chain is Octanoyltransferase, found in Thermoanaerobacter sp. (strain X514).